Reading from the N-terminus, the 608-residue chain is Tectonic-3 (608 aa).

An N-terminal signal peptide occupies residues 1–22 (MRTPQLALLQVFLLMFPDGVRP). Residues 23–58 (QPSSSPSGAVPTSLDLQPGTVGGTLQSSSEATATRP) form a disordered region. The Extracellular segment spans residues 23–586 (QPSSSPSGAV…AFSRGVSSQK (564 aa)). Residues 45 to 54 (GTLQSSSEAT) show a composition bias toward polar residues. 3 N-linked (GlcNAc...) asparagine glycosylation sites follow: Asn-78, Asn-179, and Asn-347. The helical transmembrane segment at 587–607 (CSVSPVLILCLLLLGVLNLET) threads the bilayer. Residue Thr-608 is a topological domain, cytoplasmic.

This sequence belongs to the tectonic family. As to quaternary structure, part of the tectonic-like complex (also named B9 complex).

Its subcellular location is the membrane. In terms of biological role, part of the tectonic-like complex which is required for tissue-specific ciliogenesis and may regulate ciliary membrane composition. May be involved in apoptosis regulation. Necessary for signal transduction through the sonic hedgehog (Shh) signaling pathway. This is Tectonic-3 (TCTN3) from Macaca fascicularis (Crab-eating macaque).